A 399-amino-acid chain; its full sequence is Exodeoxyribonuclease 7 large subunit (399 aa).

The protein belongs to the XseA family. In terms of assembly, heterooligomer composed of large and small subunits.

It localises to the cytoplasm. It carries out the reaction Exonucleolytic cleavage in either 5'- to 3'- or 3'- to 5'-direction to yield nucleoside 5'-phosphates.. In terms of biological role, bidirectionally degrades single-stranded DNA into large acid-insoluble oligonucleotides, which are then degraded further into small acid-soluble oligonucleotides. In Clostridium beijerinckii (strain ATCC 51743 / NCIMB 8052) (Clostridium acetobutylicum), this protein is Exodeoxyribonuclease 7 large subunit.